The chain runs to 462 residues: A-type ATP synthase subunit B (462 aa).

This sequence belongs to the ATPase alpha/beta chains family. As to quaternary structure, has multiple subunits with at least A(3), B(3), C, D, E, F, H, I and proteolipid K(x).

It localises to the cell membrane. Functionally, component of the A-type ATP synthase that produces ATP from ADP in the presence of a proton gradient across the membrane. The B chain is a regulatory subunit. The chain is A-type ATP synthase subunit B from Pyrococcus furiosus (strain ATCC 43587 / DSM 3638 / JCM 8422 / Vc1).